The primary structure comprises 443 residues: Thymidine phosphorylase (443 aa).

Belongs to the thymidine/pyrimidine-nucleoside phosphorylase family. As to quaternary structure, homodimer.

The enzyme catalyses thymidine + phosphate = 2-deoxy-alpha-D-ribose 1-phosphate + thymine. It functions in the pathway pyrimidine metabolism; dTMP biosynthesis via salvage pathway; dTMP from thymine: step 1/2. The enzymes which catalyze the reversible phosphorolysis of pyrimidine nucleosides are involved in the degradation of these compounds and in their utilization as carbon and energy sources, or in the rescue of pyrimidine bases for nucleotide synthesis. This Shewanella baltica (strain OS185) protein is Thymidine phosphorylase.